Consider the following 406-residue polypeptide: L-methionine gamma-lyase (406 aa).

Residues 76 to 78 (YQR) and 106 to 107 (GM) each bind pyridoxal 5'-phosphate. L-homocysteine is bound at residue Tyr-132. 219–221 (SAT) serves as a coordination point for pyridoxal 5'-phosphate. N6-(pyridoxal phosphate)lysine is present on Lys-222. Arg-380 contacts L-homocysteine. Arg-380 is an L-methionine binding site.

It belongs to the trans-sulfuration enzymes family. L-methionine gamma-lyase subfamily. As to quaternary structure, homotetramer. Requires pyridoxal 5'-phosphate as cofactor.

The enzyme catalyses L-methionine + H2O = methanethiol + 2-oxobutanoate + NH4(+). The catalysed reaction is L-homocysteine + H2O = 2-oxobutanoate + hydrogen sulfide + NH4(+) + H(+). Is inhibited in vitro by carbonyl reagents, completely inactivated by DL-propargylglycine, and unaffected by metal-chelating agents. In terms of biological role, catalyzes the alpha,gamma-elimination of L-methionine to produce methanethiol, 2-oxobutanoate and ammonia. May be responsible for the production of methanethiol associated with desirable Cheddar-type sulfur notes during cheese ripening. Is also able to catalyze the alpha,gamma-elimination of L-homocysteine and DL-selenomethionine, but has no activity toward L-cysteine, L-cystathionine, S-adenosyl-L-homocysteine and D-methionine. This chain is L-methionine gamma-lyase, found in Brevibacterium aurantiacum.